Reading from the N-terminus, the 161-residue chain is uncharacterized protein (161 aa).

This is an uncharacterized protein from Mycobacterium tuberculosis (strain CDC 1551 / Oshkosh).